A 667-amino-acid polypeptide reads, in one-letter code: UvrABC system protein C (667 aa).

The GIY-YIG domain occupies 43-122 (AEPGCYLMRD…IKNQQPHFNV (80 aa)). The UVR domain maps to 232–267 (QELKVLLEKQMERYSDRMDYESAANIRDQIKGLEQL).

This sequence belongs to the UvrC family. Interacts with UvrB in an incision complex.

It is found in the cytoplasm. In terms of biological role, the UvrABC repair system catalyzes the recognition and processing of DNA lesions. UvrC both incises the 5' and 3' sides of the lesion. The N-terminal half is responsible for the 3' incision and the C-terminal half is responsible for the 5' incision. This chain is UvrABC system protein C, found in Prochlorococcus marinus (strain MIT 9313).